The following is a 403-amino-acid chain: Protein-glutamate methylesterase/protein-glutamine glutaminase (403 aa).

The Response regulatory domain occupies 8–126 (AVLIVDDSAL…SAHLRTVSRK (119 aa)). Position 59 is a 4-aspartylphosphate (Asp-59). Residues 204–393 (PLRESGALQI…VSLDDMAATI (190 aa)) form the CheB-type methylesterase domain. Residues Ser-219, His-246, and Asp-342 contribute to the active site.

This sequence belongs to the CheB family. Phosphorylated by CheA. Phosphorylation of the N-terminal regulatory domain activates the methylesterase activity.

The protein resides in the cytoplasm. It catalyses the reaction [protein]-L-glutamate 5-O-methyl ester + H2O = L-glutamyl-[protein] + methanol + H(+). The catalysed reaction is L-glutaminyl-[protein] + H2O = L-glutamyl-[protein] + NH4(+). Involved in chemotaxis. Part of a chemotaxis signal transduction system that modulates chemotaxis in response to various stimuli. Catalyzes the demethylation of specific methylglutamate residues introduced into the chemoreceptors (methyl-accepting chemotaxis proteins or MCP) by CheR. Also mediates the irreversible deamidation of specific glutamine residues to glutamic acid. In Treponema pallidum (strain Nichols), this protein is Protein-glutamate methylesterase/protein-glutamine glutaminase.